Consider the following 231-residue polypeptide: Biosynthetic peptidoglycan transglycosylase (231 aa).

A helical membrane pass occupies residues 7–27 (LLFWLILVPILLVLLMQLYFF).

It belongs to the glycosyltransferase 51 family.

It localises to the cell inner membrane. The enzyme catalyses [GlcNAc-(1-&gt;4)-Mur2Ac(oyl-L-Ala-gamma-D-Glu-L-Lys-D-Ala-D-Ala)](n)-di-trans,octa-cis-undecaprenyl diphosphate + beta-D-GlcNAc-(1-&gt;4)-Mur2Ac(oyl-L-Ala-gamma-D-Glu-L-Lys-D-Ala-D-Ala)-di-trans,octa-cis-undecaprenyl diphosphate = [GlcNAc-(1-&gt;4)-Mur2Ac(oyl-L-Ala-gamma-D-Glu-L-Lys-D-Ala-D-Ala)](n+1)-di-trans,octa-cis-undecaprenyl diphosphate + di-trans,octa-cis-undecaprenyl diphosphate + H(+). It functions in the pathway cell wall biogenesis; peptidoglycan biosynthesis. Functionally, peptidoglycan polymerase that catalyzes glycan chain elongation from lipid-linked precursors. The sequence is that of Biosynthetic peptidoglycan transglycosylase from Herminiimonas arsenicoxydans.